The sequence spans 118 residues: Large ribosomal subunit protein uL18 (118 aa).

The tract at residues methionine 1–glycine 24 is disordered. Over residues isoleucine 10–glycine 20 the composition is skewed to basic residues.

This sequence belongs to the universal ribosomal protein uL18 family. In terms of assembly, part of the 50S ribosomal subunit; part of the 5S rRNA/L5/L18/L25 subcomplex. Contacts the 5S and 23S rRNAs.

This is one of the proteins that bind and probably mediate the attachment of the 5S RNA into the large ribosomal subunit, where it forms part of the central protuberance. The sequence is that of Large ribosomal subunit protein uL18 from Streptococcus sanguinis (strain SK36).